Consider the following 585-residue polypeptide: Aspartate--tRNA ligase (585 aa).

E173 is an L-aspartate binding site. The interval 197–200 is aspartate; that stretch reads QTLK. R219 contacts L-aspartate. ATP contacts are provided by residues 219–221 and Q228; that span reads RDE. H446 contacts L-aspartate. Residue E480 coordinates ATP. L-aspartate is bound at residue R487. 532 to 535 provides a ligand contact to ATP; the sequence is GLDR.

It belongs to the class-II aminoacyl-tRNA synthetase family. Type 1 subfamily. Homodimer.

It is found in the cytoplasm. The catalysed reaction is tRNA(Asp) + L-aspartate + ATP = L-aspartyl-tRNA(Asp) + AMP + diphosphate. Functionally, catalyzes the attachment of L-aspartate to tRNA(Asp) in a two-step reaction: L-aspartate is first activated by ATP to form Asp-AMP and then transferred to the acceptor end of tRNA(Asp). This Bacteroides fragilis (strain ATCC 25285 / DSM 2151 / CCUG 4856 / JCM 11019 / LMG 10263 / NCTC 9343 / Onslow / VPI 2553 / EN-2) protein is Aspartate--tRNA ligase.